The primary structure comprises 135 residues: ATP synthase epsilon chain (135 aa).

This sequence belongs to the ATPase epsilon chain family. As to quaternary structure, F-type ATPases have 2 components, CF(1) - the catalytic core - and CF(0) - the membrane proton channel. CF(1) has five subunits: alpha(3), beta(3), gamma(1), delta(1), epsilon(1). CF(0) has three main subunits: a, b and c.

It localises to the cell inner membrane. Functionally, produces ATP from ADP in the presence of a proton gradient across the membrane. The polypeptide is ATP synthase epsilon chain (Bradyrhizobium sp. (strain ORS 278)).